Here is a 145-residue protein sequence, read N- to C-terminus: S-adenosylmethionine synthase 2 (145 aa).

ATP-binding positions include 6 to 7 (RK), Ala-23, Lys-27, and Lys-31. Position 31 (Lys-31) interacts with L-methionine.

This sequence belongs to the AdoMet synthase family. Homotetramer. The cofactor is Mn(2+). Mg(2+) serves as cofactor. Requires Co(2+) as cofactor. K(+) is required as a cofactor. As to expression, mainly in floral buds and roots.

It is found in the cytoplasm. It carries out the reaction L-methionine + ATP + H2O = S-adenosyl-L-methionine + phosphate + diphosphate. The protein operates within amino-acid biosynthesis; S-adenosyl-L-methionine biosynthesis; S-adenosyl-L-methionine from L-methionine: step 1/1. Catalyzes the formation of S-adenosylmethionine from methionine and ATP. The reaction comprises two steps that are both catalyzed by the same enzyme: formation of S-adenosylmethionine (AdoMet) and triphosphate, and subsequent hydrolysis of the triphosphate. The sequence is that of S-adenosylmethionine synthase 2 (SMS-2) from Petroselinum crispum (Parsley).